The chain runs to 418 residues: Glutamyl-tRNA reductase (418 aa).

Substrate-binding positions include 49–52 (TCNR), Ser-109, 114–116 (EPQ), and Gln-120. Catalysis depends on Cys-50, which acts as the Nucleophile. Residue 189–194 (GAGETI) participates in NADP(+) binding.

Belongs to the glutamyl-tRNA reductase family. Homodimer.

The catalysed reaction is (S)-4-amino-5-oxopentanoate + tRNA(Glu) + NADP(+) = L-glutamyl-tRNA(Glu) + NADPH + H(+). It functions in the pathway porphyrin-containing compound metabolism; protoporphyrin-IX biosynthesis; 5-aminolevulinate from L-glutamyl-tRNA(Glu): step 1/2. Its function is as follows. Catalyzes the NADPH-dependent reduction of glutamyl-tRNA(Glu) to glutamate 1-semialdehyde (GSA). This is Glutamyl-tRNA reductase from Escherichia coli O127:H6 (strain E2348/69 / EPEC).